Reading from the N-terminus, the 356-residue chain is Iron-sulfur cluster assembly factor IBA57, mitochondrial (356 aa).

A mitochondrion-targeting transit peptide spans 1–39 (MATAALLRGATPGRGGPVWRWRLRAAPRCRLAHSSCSPG). Lys-309 carries the post-translational modification N6-acetyllysine; alternate. Lys-309 is subject to N6-succinyllysine; alternate.

This sequence belongs to the GcvT family. CAF17/IBA57 subfamily. Monomer. Heterotetramer; forms a dimer of dimers with ISCA2. Interacts with [2Fe-2S]-ISCA2 forming the heterodimer [2Fe- 2S]-ISCA2-IBA57 complex; [2Fe-2S] cluster binding is absolutely required to promote the complex formation. In terms of tissue distribution, expressed in skin fibroblasts and skeletal muscle (at protein level).

It is found in the mitochondrion. Its function is as follows. Mitochondrial protein involved in the maturation of mitochondrial [4Fe-4S]-proteins in the late stage of the iron-sulfur cluster assembly pathway. Operates in cooperation with ISCA2 in the maturation of [4Fe-4S] proteins. In terms of biological role, involved in the maturation of mitochondrial 2Fe-2S proteins in the late stage of the iron-sulfur cluster assembly pathway. This chain is Iron-sulfur cluster assembly factor IBA57, mitochondrial (IBA57), found in Homo sapiens (Human).